The sequence spans 126 residues: Ribosome-binding factor A (126 aa).

It belongs to the RbfA family. In terms of assembly, monomer. Binds 30S ribosomal subunits, but not 50S ribosomal subunits or 70S ribosomes.

The protein localises to the cytoplasm. Functionally, one of several proteins that assist in the late maturation steps of the functional core of the 30S ribosomal subunit. Associates with free 30S ribosomal subunits (but not with 30S subunits that are part of 70S ribosomes or polysomes). Required for efficient processing of 16S rRNA. May interact with the 5'-terminal helix region of 16S rRNA. In Nitrosospira multiformis (strain ATCC 25196 / NCIMB 11849 / C 71), this protein is Ribosome-binding factor A.